The primary structure comprises 540 residues: T-complex protein 1 subunit alpha (540 aa).

The protein belongs to the TCP-1 chaperonin family. As to quaternary structure, component of the T-complex protein 1 (TCP1) complex.

It is found in the cytoplasm. In terms of biological role, molecular chaperone; assists the folding of proteins upon ATP hydrolysis. The polypeptide is T-complex protein 1 subunit alpha (TCP1) (Encephalitozoon cuniculi (strain GB-M1) (Microsporidian parasite)).